Consider the following 720-residue polypeptide: Aminopeptidase RNPEPL1 (720 aa).

321–325 (VAMEN) serves as a coordination point for substrate. Histidine 348 contributes to the Zn(2+) binding site. Residue glutamate 349 is the Proton acceptor of the active site. Zn(2+) is bound by residues histidine 352 and glutamate 371. Residues 671 to 708 (GLGPSAEPSTEPSTDLGGAEADTNPDSPALLLGDEAPS) are disordered.

Belongs to the peptidase M1 family. The cofactor is Zn(2+).

The catalysed reaction is Release of N-terminal amino acids, preferentially methionine, from peptides and arylamides.. Its function is as follows. Broad specificity aminopeptidase which preferentially hydrolyzes an N-terminal methionine, citrulline or glutamine. This is Aminopeptidase RNPEPL1 from Mus musculus (Mouse).